A 224-amino-acid chain; its full sequence is Menaquinol:cytochrome c reductase cytochrome b subunit (224 aa).

Residues Phe37–Leu57 traverse the membrane as a helical segment. Position 42 (Tyr42) interacts with heme b. Cys43 lines the heme c pocket. Positions 91, 94, 108, and 111 each coordinate heme b. A run of 3 helical transmembrane segments spans residues Trp96–Gly116, Trp126–Leu146, and Ile195–Ile215. Positions 196 and 211 each coordinate heme b. Arg216 and Ile220 together coordinate heme c. Ser221 contacts heme b.

Belongs to the cytochrome b family. The main subunits of the menaquinol:cytochrome c complex are a Rieske-type iron-sulfur protein (QcrA), a cytochrome b (QcrB) and a cytochrome c (QcrC). The cofactor is heme b. Heme c serves as cofactor.

It localises to the cell membrane. Its function is as follows. Component of the menaquinol:cytochrome c reductase complex. This chain is Menaquinol:cytochrome c reductase cytochrome b subunit (qcrB), found in Geobacillus thermodenitrificans.